A 692-amino-acid polypeptide reads, in one-letter code: Vitamin B12-dependent ribonucleoside-diphosphate reductase (692 aa).

In terms of domain architecture, ATP-cone spans 7-95; that stretch reads AKVRRRDGTL…IYRQRRAELR (89 aa). Substrate contacts are provided by residues S177, 192 to 193, G221, 375 to 379, and 520 to 524; these read GC, NPCGE, and PTGTI. The cysteines at positions 193 and 388 are disulfide-linked. N375 (proton acceptor) is an active-site residue. C377 functions as the Cysteine radical intermediate in the catalytic mechanism. Residue E379 is the Proton acceptor of the active site.

The protein belongs to the ribonucleoside diphosphate reductase class-2 family. It depends on adenosylcob(III)alamin as a cofactor.

It carries out the reaction a 2'-deoxyribonucleoside 5'-diphosphate + [thioredoxin]-disulfide + H2O = a ribonucleoside 5'-diphosphate + [thioredoxin]-dithiol. Its function is as follows. Provides the precursors necessary for DNA synthesis. Catalyzes the biosynthesis of deoxyribonucleotides from the corresponding ribonucleotides. The chain is Vitamin B12-dependent ribonucleoside-diphosphate reductase (nrdZ) from Mycobacterium tuberculosis (strain CDC 1551 / Oshkosh).